Consider the following 3210-residue polypeptide: PF 1022-synthetase (3210 aa).

The condensation 1 stretch occupies residues 68–454 (VDDRRHAIGH…VKELDVVTAE (387 aa)). Residues 483-876 (AGDPNKAAVF…GRKDSQVKIR (394 aa)) are adenylation 1. The Carrier 1 domain maps to 1010 to 1086 (APATGIEVKL…GLVDVIGRDP (77 aa)). O-(pantetheine 4'-phosphoryl)serine is present on Ser1047. The interval 1104 to 1534 (SFAQGRLWFL…RTPIAVLPLT (431 aa)) is condensation 2. An adenylation 2 region spans residues 1563-2023 (FRKQVAAHPH…GRMDQQVKIR (461 aa)). Positions 2081–2236 (EGWKDFFESN…YLLEVVESLV (156 aa)) are S-adenosyl-L-methionine-dependent N-methyltransferase. 2 Carrier domains span residues 2570-2644 (DPFV…RQGL) and 2668-2742 (TPSD…RLTQ). An O-(pantetheine 4'-phosphoryl)serine mark is found at Ser2604 and Ser2702. A condensation 3 region spans residues 2788–3203 (LDVYPATQMQ…KRMLEELCGN (416 aa)). A disordered region spans residues 2976–3002 (VIKGNNNTTPPPPPQQQSTPSGAHHAS).

This sequence belongs to the NRP synthetase family. It depends on pantetheine 4'-phosphate as a cofactor.

It catalyses the reaction 2 (R)-3-phenyllactate + 2 (R)-lactate + 4 L-leucine + 4 S-adenosyl-L-methionine + 8 ATP = PF1022A + 8 AMP + 4 S-adenosyl-L-homocysteine + 8 diphosphate + 8 H(+). It carries out the reaction 4 (R)-3-phenyllactate + 4 L-leucine + 4 S-adenosyl-L-methionine + 8 ATP = PF1022B + 8 AMP + 4 S-adenosyl-L-homocysteine + 8 diphosphate + 8 H(+). The enzyme catalyses 3 (R)-3-phenyllactate + (R)-lactate + 4 L-leucine + 4 S-adenosyl-L-methionine + 8 ATP = PF1022C + 8 AMP + 4 S-adenosyl-L-homocysteine + 8 diphosphate + 8 H(+). The catalysed reaction is (R)-3-phenyllactate + 3 (R)-lactate + 4 L-leucine + 4 S-adenosyl-L-methionine + 8 ATP = PF1022D + 8 AMP + 4 S-adenosyl-L-homocysteine + 8 diphosphate + 8 H(+). It catalyses the reaction 4 (R)-lactate + 4 L-leucine + 4 S-adenosyl-L-methionine + 8 ATP = PF1022F + 8 AMP + 4 S-adenosyl-L-homocysteine + 8 diphosphate + 8 H(+). Functionally, nonribosomal peptide synthetase that synthesizes cyclooctadepsipeptides (CODPs) PF 1022 that show powerful broad-spectrum anthelmintic activity with low toxicity in animals. Couples 4 N-methyl-L-leucines and a varying content of alpha-D-hydroxy acids (D-lactates or D-phenyllactates) in an alternative fashion. The enzyme is capable of synthesizing all known natural cyclooctadepsipeptides of the PF1022 type differing in the content of D-lactate and D-phenyllactate, using from 4 D-lactates (PF 1022F) to 4 D-phenyllactates (PF 1022B), respectively. The formation of different PF-related compounds is mainly controlled by the molar ratio of the hydroxy acids. N-methylation of the substrate L-leucine takes place after covalent binding prior to peptide bond formation. This is PF 1022-synthetase from Rosellinia sp. (Mycelia sterilia).